Consider the following 443-residue polypeptide: DNA double-strand break repair protein Mre11 (443 aa).

Mn(2+) contacts are provided by Asp-8, His-10, Asp-49, and Asn-84. The Proton donor role is filled by His-85. Mn(2+) contacts are provided by His-169, His-201, and His-203. Residues 382–429 are disordered; sequence QEEGAEERVVEEETEKKVEEQFKGDEEADEAERRAEETEKAKSTKKAR. Over residues 395-423 the composition is skewed to basic and acidic residues; it reads TEKKVEEQFKGDEEADEAERRAEETEKAK.

It belongs to the MRE11/RAD32 family. In terms of assembly, homodimer. Forms a heterotetramer composed of two Mre11 subunits and two Rad50 subunits. Requires Mn(2+) as cofactor.

Nuclease activity is regulated by Rad50. Functionally, part of the Rad50/Mre11 complex, which is involved in the early steps of DNA double-strand break (DSB) repair. The complex may facilitate opening of the processed DNA ends to aid in the recruitment of HerA and NurA. Mre11 binds to DSB ends and has both double-stranded 3'-5' exonuclease activity and single-stranded endonuclease activity. The polypeptide is DNA double-strand break repair protein Mre11 (Archaeoglobus fulgidus (strain ATCC 49558 / DSM 4304 / JCM 9628 / NBRC 100126 / VC-16)).